The chain runs to 699 residues: Elongation factor G (699 aa).

One can recognise a tr-type G domain in the interval Asn10 to Thr292. GTP-binding positions include Ala19–Thr26, Asp90–His94, and Asn144–Asp147. Residues Thr292–Ser312 form a disordered region.

The protein belongs to the TRAFAC class translation factor GTPase superfamily. Classic translation factor GTPase family. EF-G/EF-2 subfamily.

Its subcellular location is the cytoplasm. Its function is as follows. Catalyzes the GTP-dependent ribosomal translocation step during translation elongation. During this step, the ribosome changes from the pre-translocational (PRE) to the post-translocational (POST) state as the newly formed A-site-bound peptidyl-tRNA and P-site-bound deacylated tRNA move to the P and E sites, respectively. Catalyzes the coordinated movement of the two tRNA molecules, the mRNA and conformational changes in the ribosome. The protein is Elongation factor G of Coxiella burnetii (strain CbuG_Q212) (Coxiella burnetii (strain Q212)).